The following is a 340-amino-acid chain: Glycerol-3-phosphate dehydrogenase [NAD(P)+] (340 aa).

NADPH-binding residues include Ser12, Trp13, and Lys110. Lys110, Gly141, and Ser143 together coordinate sn-glycerol 3-phosphate. Position 145 (Ala145) interacts with NADPH. Sn-glycerol 3-phosphate contacts are provided by Lys196, Asp249, Ser259, Arg260, and Asn261. The active-site Proton acceptor is Lys196. Arg260 contributes to the NADPH binding site. The NADPH site is built by Val284 and Glu286.

It belongs to the NAD-dependent glycerol-3-phosphate dehydrogenase family.

Its subcellular location is the cytoplasm. It carries out the reaction sn-glycerol 3-phosphate + NAD(+) = dihydroxyacetone phosphate + NADH + H(+). The catalysed reaction is sn-glycerol 3-phosphate + NADP(+) = dihydroxyacetone phosphate + NADPH + H(+). The protein operates within membrane lipid metabolism; glycerophospholipid metabolism. Its function is as follows. Catalyzes the reduction of the glycolytic intermediate dihydroxyacetone phosphate (DHAP) to sn-glycerol 3-phosphate (G3P), the key precursor for phospholipid synthesis. This Latilactobacillus sakei subsp. sakei (strain 23K) (Lactobacillus sakei subsp. sakei) protein is Glycerol-3-phosphate dehydrogenase [NAD(P)+].